A 346-amino-acid chain; its full sequence is Methylthioribose-1-phosphate isomerase (346 aa).

Substrate-binding positions include 46-48, Arg89, and Gln196; that span reads RGA. The Proton donor role is filled by Asp237. 247–248 lines the substrate pocket; that stretch reads NK.

This sequence belongs to the eIF-2B alpha/beta/delta subunits family. MtnA subfamily.

It carries out the reaction 5-(methylsulfanyl)-alpha-D-ribose 1-phosphate = 5-(methylsulfanyl)-D-ribulose 1-phosphate. The protein operates within amino-acid biosynthesis; L-methionine biosynthesis via salvage pathway; L-methionine from S-methyl-5-thio-alpha-D-ribose 1-phosphate: step 1/6. In terms of biological role, catalyzes the interconversion of methylthioribose-1-phosphate (MTR-1-P) into methylthioribulose-1-phosphate (MTRu-1-P). The sequence is that of Methylthioribose-1-phosphate isomerase from Geobacter metallireducens (strain ATCC 53774 / DSM 7210 / GS-15).